The following is a 1057-amino-acid chain: Structural maintenance of chromosomes protein 6B (1057 aa).

The region spanning 22 to 1047 is the Zinc-hook domain; that stretch reads ILRIKVENFM…ISMVKSHERI (1026 aa). Residue 49 to 56 participates in ATP binding; sequence GQNGSGKS. A coiled-coil region spans residues 135 to 448; that stretch reads KVSNKRDELR…NDLKKHQTNK (314 aa). A flexible hinge region spans residues 449 to 632; it reads VTAFGGDRVI…PPLSRRPSRL (184 aa). Residues 633 to 904 adopt a coiled-coil conformation; it reads CASFDDQIKD…QDHREKLMAC (272 aa). Residues 818 to 828 are compositionally biased toward basic and acidic residues; that stretch reads KNKRKESDQKA. Positions 818–845 are disordered; the sequence is KNKRKESDQKASEICPESEIESLGPWDG.

Belongs to the SMC family. SMC6 subfamily. Forms a heterodimer with SMC5. The SMC5-SMC6 complex is composed of the SMC5 and SMC6 heterodimer attached via their hinge domain and from the non-SMC subunit NSE4A or NSE4B. In terms of tissue distribution, expressed in seedlings, rosette leaves and floral buds.

It is found in the nucleus. Its subcellular location is the chromosome. Core component of the SMC5-SMC6 complex that promotes sister chromatid alignment after DNA damage and facilitates double-stranded DNA breaks (DSBs) repair via homologous recombination between sister chromatids. This is Structural maintenance of chromosomes protein 6B (SMC6B) from Arabidopsis thaliana (Mouse-ear cress).